The primary structure comprises 79 residues: Large ribosomal subunit protein uL24 (79 aa).

Belongs to the universal ribosomal protein uL24 family. As to quaternary structure, part of the 50S ribosomal subunit.

Its function is as follows. One of two assembly initiator proteins, it binds directly to the 5'-end of the 23S rRNA, where it nucleates assembly of the 50S subunit. Functionally, one of the proteins that surrounds the polypeptide exit tunnel on the outside of the subunit. The polypeptide is Large ribosomal subunit protein uL24 (Aliarcobacter butzleri (strain RM4018) (Arcobacter butzleri)).